We begin with the raw amino-acid sequence, 319 residues long: Biotin synthase (319 aa).

A Radical SAM core domain is found at 41-267 (YKGNKVKVCS…TPDIMICGGR (227 aa)). [4Fe-4S] cluster-binding residues include C59, C63, and C66. C192 is a [2Fe-2S] cluster binding site.

It belongs to the radical SAM superfamily. Biotin synthase family. Homodimer. [4Fe-4S] cluster is required as a cofactor. It depends on [2Fe-2S] cluster as a cofactor.

It carries out the reaction (4R,5S)-dethiobiotin + (sulfur carrier)-SH + 2 reduced [2Fe-2S]-[ferredoxin] + 2 S-adenosyl-L-methionine = (sulfur carrier)-H + biotin + 2 5'-deoxyadenosine + 2 L-methionine + 2 oxidized [2Fe-2S]-[ferredoxin]. It functions in the pathway cofactor biosynthesis; biotin biosynthesis; biotin from 7,8-diaminononanoate: step 2/2. Its function is as follows. Catalyzes the conversion of dethiobiotin (DTB) to biotin by the insertion of a sulfur atom into dethiobiotin via a radical-based mechanism. The protein is Biotin synthase of Endomicrobium trichonymphae.